A 274-amino-acid polypeptide reads, in one-letter code: Ubiquinone biosynthesis protein COQ4 homolog, mitochondrial (274 aa).

The N-terminal 20 residues, 1–20 (MLRQTAFRSMKLNRTPGRYF), are a transit peptide targeting the mitochondrion. Positions 13–40 (NRTPGRYFTTAENMDTGSSQSPPDTEQK) are disordered. Positions 22–36 (TAENMDTGSSQSPPD) are enriched in polar residues. Zn(2+) is bound by residues histidine 177, aspartate 178, histidine 181, and glutamate 193.

It belongs to the COQ4 family. Component of a multi-subunit COQ enzyme complex. The cofactor is Zn(2+).

The protein resides in the mitochondrion inner membrane. The enzyme catalyses a 4-hydroxy-3-methoxy-5-(all-trans-polyprenyl)benzoate + H(+) = a 2-methoxy-6-(all-trans-polyprenyl)phenol + CO2. The protein operates within cofactor biosynthesis; ubiquinone biosynthesis. Functionally, lyase that catalyzes the C1-decarboxylation of 4-hydroxy-3-methoxy-5-(all-trans-polyprenyl)benzoic acid into 2-methoxy-6-(all-trans-polyprenyl)phenol during ubiquinone biosynthesis. In Aedes aegypti (Yellowfever mosquito), this protein is Ubiquinone biosynthesis protein COQ4 homolog, mitochondrial.